The chain runs to 101 residues: Large ribosomal subunit protein eL30 (101 aa).

Belongs to the eukaryotic ribosomal protein eL30 family.

This is Large ribosomal subunit protein eL30 (rpl30e) from Thermococcus celer.